The following is a 400-amino-acid chain: Argininosuccinate synthase (400 aa).

Residues 9–17 and Ala-37 each bind ATP; that span reads AYSGGVDTS. Position 88 (Tyr-88) interacts with L-citrulline. Gly-118 contributes to the ATP binding site. L-aspartate is bound by residues Thr-120, Asn-124, and Asp-125. Asn-124 is a binding site for L-citrulline. L-citrulline-binding residues include Arg-128, Ser-176, Ser-185, Glu-261, and Tyr-273.

The protein belongs to the argininosuccinate synthase family. Type 1 subfamily. Homotetramer.

It localises to the cytoplasm. It catalyses the reaction L-citrulline + L-aspartate + ATP = 2-(N(omega)-L-arginino)succinate + AMP + diphosphate + H(+). The protein operates within amino-acid biosynthesis; L-arginine biosynthesis; L-arginine from L-ornithine and carbamoyl phosphate: step 2/3. The protein is Argininosuccinate synthase of Prochlorococcus marinus (strain MIT 9211).